The primary structure comprises 84 residues: Toxin To5 (84 aa).

An N-terminal signal peptide occupies residues M1–G19. Residues R21 to G82 enclose the LCN-type CS-alpha/beta domain. Disulfide bonds link C31-C81, C35-C57, C43-C62, and C47-C64. C81 is subject to Cysteine amide.

In terms of tissue distribution, expressed by the venom gland.

It is found in the secreted. In terms of biological role, beta toxins bind voltage-independently at site-4 of sodium channels (Nav) and shift the voltage of activation toward more negative potentials thereby affecting sodium channel activation and promoting spontaneous and repetitive firing. This Tityus obscurus (Amazonian scorpion) protein is Toxin To5.